Here is a 318-residue protein sequence, read N- to C-terminus: Aspartate carbamoyltransferase catalytic subunit (318 aa).

Carbamoyl phosphate-binding residues include arginine 54 and threonine 55. Lysine 82 provides a ligand contact to L-aspartate. Arginine 104, histidine 134, and glutamine 137 together coordinate carbamoyl phosphate. Residues arginine 174 and arginine 230 each coordinate L-aspartate. Positions 271 and 272 each coordinate carbamoyl phosphate.

It belongs to the aspartate/ornithine carbamoyltransferase superfamily. ATCase family. In terms of assembly, heterododecamer (2C3:3R2) of six catalytic PyrB chains organized as two trimers (C3), and six regulatory PyrI chains organized as three dimers (R2).

The catalysed reaction is carbamoyl phosphate + L-aspartate = N-carbamoyl-L-aspartate + phosphate + H(+). Its pathway is pyrimidine metabolism; UMP biosynthesis via de novo pathway; (S)-dihydroorotate from bicarbonate: step 2/3. In terms of biological role, catalyzes the condensation of carbamoyl phosphate and aspartate to form carbamoyl aspartate and inorganic phosphate, the committed step in the de novo pyrimidine nucleotide biosynthesis pathway. The protein is Aspartate carbamoyltransferase catalytic subunit of Clavibacter sepedonicus (Clavibacter michiganensis subsp. sepedonicus).